A 118-amino-acid chain; its full sequence is Evasin P1080 (118 aa).

The signal sequence occupies residues Phe1–Ala19. 3 disulfide bridges follow: Cys41–Cys60, Cys45–Cys62, and Cys56–Cys73. Residue Asn44 is glycosylated (N-linked (GlcNAc...) asparagine). Asn67 and Asn104 each carry an N-linked (GlcNAc...) asparagine glycan.

It is found in the secreted. Its function is as follows. Salivary chemokine-binding protein which binds to host chemokines CXCL1, CXCL2, CXCL3, CXCL4, CXCL5, CXCL6, CXCL10, CXCL11 and CXCL13. The polypeptide is Evasin P1080 (Ixodes ricinus (Common tick)).